A 549-amino-acid chain; its full sequence is Formate--tetrahydrofolate ligase (549 aa).

60–67 (TPYGEGKT) serves as a coordination point for ATP.

Belongs to the formate--tetrahydrofolate ligase family.

It carries out the reaction (6S)-5,6,7,8-tetrahydrofolate + formate + ATP = (6R)-10-formyltetrahydrofolate + ADP + phosphate. It participates in one-carbon metabolism; tetrahydrofolate interconversion. In Campylobacter concisus (strain 13826), this protein is Formate--tetrahydrofolate ligase.